The chain runs to 192 residues: Peptidyl-tRNA hydrolase (192 aa).

A tRNA-binding site is contributed by tyrosine 17. The active-site Proton acceptor is the histidine 22. TRNA is bound by residues phenylalanine 67, asparagine 69, and asparagine 115.

Belongs to the PTH family. In terms of assembly, monomer.

It is found in the cytoplasm. The catalysed reaction is an N-acyl-L-alpha-aminoacyl-tRNA + H2O = an N-acyl-L-amino acid + a tRNA + H(+). In terms of biological role, hydrolyzes ribosome-free peptidyl-tRNAs (with 1 or more amino acids incorporated), which drop off the ribosome during protein synthesis, or as a result of ribosome stalling. Catalyzes the release of premature peptidyl moieties from peptidyl-tRNA molecules trapped in stalled 50S ribosomal subunits, and thus maintains levels of free tRNAs and 50S ribosomes. This chain is Peptidyl-tRNA hydrolase, found in Methylobacillus flagellatus (strain ATCC 51484 / DSM 6875 / VKM B-1610 / KT).